Reading from the N-terminus, the 444-residue chain is Phosphoglucosamine mutase (444 aa).

Catalysis depends on S104, which acts as the Phosphoserine intermediate. Mg(2+)-binding residues include S104, D243, D245, and D247. S104 is modified (phosphoserine).

Belongs to the phosphohexose mutase family. It depends on Mg(2+) as a cofactor. In terms of processing, activated by phosphorylation.

It carries out the reaction alpha-D-glucosamine 1-phosphate = D-glucosamine 6-phosphate. Catalyzes the conversion of glucosamine-6-phosphate to glucosamine-1-phosphate. This Neisseria meningitidis serogroup C (strain 053442) protein is Phosphoglucosamine mutase.